Here is a 117-residue protein sequence, read N- to C-terminus: Ig heavy chain V region 23 (117 aa).

Residues 1–19 (MGWSCIILFLVAAANGVHS) form the signal peptide. Positions 20 to 49 (QVQLQQPGTELVKPGASVKLSCKASGYTFT) are framework-1. Residues Cys-41 and Cys-115 are joined by a disulfide bond. A complementarity-determining-1 region spans residues 50 to 54 (SYWMH). Residues 55 to 68 (WVKQRPGQGLEWIG) form a framework-2 region. The interval 69 to 85 (NINPGNGGTNYNEKFKS) is complementarity-determining-2. Positions 86–117 (KVTLTVDKSSSTAYTQLSSLTSEDSAVYYCAR) are framework-3.

This is Ig heavy chain V region 23 from Mus musculus (Mouse).